The primary structure comprises 65 residues: UPF0434 protein CC_0108 (65 aa).

This sequence belongs to the UPF0434 family.

This chain is UPF0434 protein CC_0108, found in Caulobacter vibrioides (strain ATCC 19089 / CIP 103742 / CB 15) (Caulobacter crescentus).